We begin with the raw amino-acid sequence, 641 residues long: Leucine-rich repeat receptor-like serine/threonine/tyrosine-protein kinase SOBIR1 (641 aa).

The signal sequence occupies residues 1–31; it reads MAVPTGSANLFLRPLILAVLSFLLLSSFVSS. Topologically, residues 32–284 are extracellular; sequence VEWLDIDSSD…KKKKSKKKKV (253 aa). 5 LRR repeats span residues 112 to 133, 136 to 159, 160 to 182, 183 to 205, and 207 to 228; these read ELKE…DILS, QLEV…SSLS, RLRI…KNLR, NLEN…IVSF, and NLRF…VMSS. A glycan (N-linked (GlcNAc...) asparagine) is linked at asparagine 154. N-linked (GlcNAc...) asparagine glycosylation is present at asparagine 186. The disordered stretch occupies residues 243-278; the sequence is AETPTSSPTNKPNNSTTSKAPKGAPKPGKLKKKKKK. The segment covering 245-259 has biased composition (polar residues); the sequence is TPTSSPTNKPNNSTT. N-linked (GlcNAc...) asparagine glycosylation occurs at asparagine 256. Residues 260–269 are compositionally biased toward low complexity; it reads SKAPKGAPKP. A helical transmembrane segment spans residues 285–305; it reads AAWILGFVVGAIGGTISGFVF. Topologically, residues 306 to 641 are cytoplasmic; it reads SVLFKLIIQA…VRTMLSQIKH (336 aa). Positions 347 to 641 constitute a Protein kinase domain; it reads LASLEIIGRG…VRTMLSQIKH (295 aa). ATP is bound by residues 353–361 and lysine 377; that span reads IGRGGCGEV. The Proton acceptor role is filled by aspartate 489.

It belongs to the protein kinase superfamily. Ser/Thr protein kinase family. As to quaternary structure, interacts with CST. Interacts with RLP23. Component of a trimeric complex composed of RLP23, SOBIR1 and BAK1. BAK1 is recruited into a pre-formed RLP23-SOBIR1 complex in a ligand-dependent manner. Autophosphorylated on Ser, Thr and Tyr residues. In terms of tissue distribution, mostly present in leaves and flowers, with increasing expression in older flowers.

It localises to the cell membrane. The catalysed reaction is L-seryl-[protein] + ATP = O-phospho-L-seryl-[protein] + ADP + H(+). It carries out the reaction L-threonyl-[protein] + ATP = O-phospho-L-threonyl-[protein] + ADP + H(+). It catalyses the reaction L-tyrosyl-[protein] + ATP = O-phospho-L-tyrosyl-[protein] + ADP + H(+). Functionally, dual specificity kinase acting on both serine/threonine- and tyrosine-containing substrates. Acting as a counterplayer of BIR1, promotes the activation of plant defense and cell death. Component of the RLP23-SOBIR1-BAK1 complex that mediates NLP-triggered immunity. Functions as an inhibitor/regulator of abscission, probably by regulating membrane trafficking during abscission. The chain is Leucine-rich repeat receptor-like serine/threonine/tyrosine-protein kinase SOBIR1 (SOBIR1) from Arabidopsis thaliana (Mouse-ear cress).